Here is a 126-residue protein sequence, read N- to C-terminus: MAVVGLGTDIAEIERVEKALSRSGEAFAQRILTDSEFEVFQQLKQKGRYLAKRFAAKEAASKALGTGIALGVTFHDFEISNDEHGKPVLSLHKKAREIADASGTKSIHLTISDERHYAVATVLLES.

Positions 9 and 58 each coordinate Mg(2+).

The protein belongs to the P-Pant transferase superfamily. AcpS family. Mg(2+) serves as cofactor.

Its subcellular location is the cytoplasm. The enzyme catalyses apo-[ACP] + CoA = holo-[ACP] + adenosine 3',5'-bisphosphate + H(+). Transfers the 4'-phosphopantetheine moiety from coenzyme A to a Ser of acyl-carrier-protein. This chain is Holo-[acyl-carrier-protein] synthase, found in Vibrio atlanticus (strain LGP32) (Vibrio splendidus (strain Mel32)).